The primary structure comprises 376 residues: Chaperone protein DnaJ (376 aa).

Positions 5–70 (DYYEVLGVAK…QKRAAYDQYG (66 aa)) constitute a J domain. Residues 136–214 (GYDTQIRVPS…CHGSGKVKET (79 aa)) form a CR-type zinc finger. Positions 149, 152, 166, 169, 188, 191, 202, and 205 each coordinate Zn(2+). 4 CXXCXGXG motif repeats span residues 149 to 156 (CEVCHGSG), 166 to 173 (CPTCHGQG), 188 to 195 (CPKCHGTG), and 202 to 209 (CAHCHGSG).

This sequence belongs to the DnaJ family. In terms of assembly, homodimer. It depends on Zn(2+) as a cofactor.

The protein localises to the cytoplasm. Functionally, participates actively in the response to hyperosmotic and heat shock by preventing the aggregation of stress-denatured proteins and by disaggregating proteins, also in an autonomous, DnaK-independent fashion. Unfolded proteins bind initially to DnaJ; upon interaction with the DnaJ-bound protein, DnaK hydrolyzes its bound ATP, resulting in the formation of a stable complex. GrpE releases ADP from DnaK; ATP binding to DnaK triggers the release of the substrate protein, thus completing the reaction cycle. Several rounds of ATP-dependent interactions between DnaJ, DnaK and GrpE are required for fully efficient folding. Also involved, together with DnaK and GrpE, in the DNA replication of plasmids through activation of initiation proteins. This Burkholderia multivorans (strain ATCC 17616 / 249) protein is Chaperone protein DnaJ.